Reading from the N-terminus, the 184-residue chain is MSRIGKRPISIPGGVDVNIEGNVVTVKGPKGTLTKEMHSLINIAVEEQQIVVTRPDDQPLSRSLHGLTRTLVANMVEGVTKGFSKSLDMVGVGYRAAKQGNKLVLSVGKSHPVELIPFEGIEVEVPAQNKIIVKGMDKELVGDFAAEIRKERPPEPYKGKGIKYENEVVRRKAGKTGAKKGGKK.

This sequence belongs to the universal ribosomal protein uL6 family. Part of the 50S ribosomal subunit.

Its function is as follows. This protein binds to the 23S rRNA, and is important in its secondary structure. It is located near the subunit interface in the base of the L7/L12 stalk, and near the tRNA binding site of the peptidyltransferase center. The polypeptide is Large ribosomal subunit protein uL6 (Desulfitobacterium hafniense (strain Y51)).